Here is a 179-residue protein sequence, read N- to C-terminus: Large ribosomal subunit protein uL5 (179 aa).

Belongs to the universal ribosomal protein uL5 family. In terms of assembly, part of the 50S ribosomal subunit; part of the 5S rRNA/L5/L18/L25 subcomplex. Contacts the 5S rRNA and the P site tRNA. Forms a bridge to the 30S subunit in the 70S ribosome.

In terms of biological role, this is one of the proteins that bind and probably mediate the attachment of the 5S RNA into the large ribosomal subunit, where it forms part of the central protuberance. In the 70S ribosome it contacts protein S13 of the 30S subunit (bridge B1b), connecting the 2 subunits; this bridge is implicated in subunit movement. Contacts the P site tRNA; the 5S rRNA and some of its associated proteins might help stabilize positioning of ribosome-bound tRNAs. This is Large ribosomal subunit protein uL5 from Prochlorococcus marinus (strain MIT 9303).